The following is a 645-amino-acid chain: Cyclin-D-binding Myb-like transcription factor 1 (645 aa).

2 disordered regions span residues 34 to 71 and 95 to 119; these read QNDGEDLGSDETTEPVHKRIRLSSEDGEDPQDSASTEY and RDEELESDDLSETTGKDSSAQKKGE. Acidic residues-rich tracts occupy residues 36 to 46 and 95 to 105; these read DGEDLGSDETT and RDEELESDDLS. The 39-residue stretch at 219 to 257 folds into the Myb-like 1 domain; that stretch reads GKYTDEEINKLKELRQKHGNDWATIGSALGRSASSVKDR. Residues 262–327 enclose the HTH myb-type domain; sequence KDTCNTGKWT…KWLNYLNWKQ (66 aa). Positions 300–323 form a DNA-binding region, H-T-H motif; sequence WASVAELVGTRSEKQCRSKWLNYL. Residues 333–382 form the Myb-like 2 domain; that stretch reads WTKEDDINLVRRIAELEVEDENEINWDILASGWSSVRSPQWLRSKWWTIK. The interval 568–645 is disordered; sequence VKEEPSENQT…ILENQEEGSN (78 aa). Over residues 587 to 597 the composition is skewed to basic and acidic residues; sequence EQSKQGEKTLD. Residues 615-625 are compositionally biased toward polar residues; it reads IPTNEDISSDS.

It belongs to the DMTF1 family.

The protein resides in the nucleus. Functionally, transcriptional activator which activates the CDKN2A/ARF locus in response to Ras-Raf signaling, thereby promoting p53/TP53-dependent growth arrest. Binds to the consensus sequence 5'-CCCG[GT]ATGT-3'. The protein is Cyclin-D-binding Myb-like transcription factor 1 (dmtf1) of Danio rerio (Zebrafish).